The sequence spans 158 residues: Transcriptional repressor NrdR (158 aa).

The segment at cysteine 3–cysteine 34 is a zinc-finger region. Positions isoleucine 49 to threonine 139 constitute an ATP-cone domain.

It belongs to the NrdR family. Requires Zn(2+) as cofactor.

In terms of biological role, negatively regulates transcription of bacterial ribonucleotide reductase nrd genes and operons by binding to NrdR-boxes. This chain is Transcriptional repressor NrdR, found in Caldanaerobacter subterraneus subsp. tengcongensis (strain DSM 15242 / JCM 11007 / NBRC 100824 / MB4) (Thermoanaerobacter tengcongensis).